We begin with the raw amino-acid sequence, 598 residues long: ATP-dependent lipid A-core flippase (598 aa).

Positions 1-15 are enriched in polar residues; sequence MSQAYQPDSTKTSAK. The interval 1–21 is disordered; it reads MSQAYQPDSTKTSAKTPVAPT. A run of 4 helical transmembrane segments spans residues 44 to 64, 85 to 105, 172 to 192, and 269 to 289; these read WWAILLTIIGFAINAATEIWI, LFPFIIVMLFFVRGVGSFLGN, VVALMGFLLYSNWRLTLILFV, and INTPAVQLLMAMAMAVVVWLA. The region spanning 48–329 is the ABC transmembrane type-1 domain; the sequence is LLTIIGFAIN…LTDVNQQLQR (282 aa). An ABC transporter domain is found at 360-595; that stretch reads IKLDNVSLVY…HGHYAQMYAR (236 aa). 393–400 lines the ATP pocket; that stretch reads GRSGAGKS.

This sequence belongs to the ABC transporter superfamily. Lipid exporter (TC 3.A.1.106) family. As to quaternary structure, homodimer.

Its subcellular location is the cell inner membrane. It carries out the reaction ATP + H2O + lipid A-core oligosaccharideSide 1 = ADP + phosphate + lipid A-core oligosaccharideSide 2.. Its function is as follows. Involved in lipopolysaccharide (LPS) biosynthesis. Translocates lipid A-core from the inner to the outer leaflet of the inner membrane. Transmembrane domains (TMD) form a pore in the inner membrane and the ATP-binding domain (NBD) is responsible for energy generation. The polypeptide is ATP-dependent lipid A-core flippase (Psychrobacter cryohalolentis (strain ATCC BAA-1226 / DSM 17306 / VKM B-2378 / K5)).